Consider the following 283-residue polypeptide: Elongation factor Ts (283 aa).

An involved in Mg(2+) ion dislocation from EF-Tu region spans residues 84-87 (TDFV).

The protein belongs to the EF-Ts family.

Its subcellular location is the cytoplasm. In terms of biological role, associates with the EF-Tu.GDP complex and induces the exchange of GDP to GTP. It remains bound to the aminoacyl-tRNA.EF-Tu.GTP complex up to the GTP hydrolysis stage on the ribosome. This Bifidobacterium longum (strain DJO10A) protein is Elongation factor Ts.